A 704-amino-acid polypeptide reads, in one-letter code: DNA ligase (704 aa).

NAD(+)-binding positions include 58 to 62 (DYEYD), 107 to 108 (SL), and glutamate 138. The active-site N6-AMP-lysine intermediate is lysine 140. 4 residues coordinate NAD(+): arginine 161, glutamate 199, lysine 323, and lysine 347. Zn(2+) contacts are provided by cysteine 441, cysteine 444, cysteine 459, and cysteine 464. Residues 621–704 (EKKGKLAGLN…LKLIGGENTE (84 aa)) form the BRCT domain.

This sequence belongs to the NAD-dependent DNA ligase family. LigA subfamily. Mg(2+) is required as a cofactor. Requires Mn(2+) as cofactor.

The enzyme catalyses NAD(+) + (deoxyribonucleotide)n-3'-hydroxyl + 5'-phospho-(deoxyribonucleotide)m = (deoxyribonucleotide)n+m + AMP + beta-nicotinamide D-nucleotide.. In terms of biological role, DNA ligase that catalyzes the formation of phosphodiester linkages between 5'-phosphoryl and 3'-hydroxyl groups in double-stranded DNA using NAD as a coenzyme and as the energy source for the reaction. It is essential for DNA replication and repair of damaged DNA. In Sulfurihydrogenibium sp. (strain YO3AOP1), this protein is DNA ligase.